A 345-amino-acid polypeptide reads, in one-letter code: N-acetyl-gamma-glutamyl-phosphate reductase (345 aa).

Residue C149 is part of the active site.

Belongs to the NAGSA dehydrogenase family. Type 1 subfamily.

It localises to the cytoplasm. The enzyme catalyses N-acetyl-L-glutamate 5-semialdehyde + phosphate + NADP(+) = N-acetyl-L-glutamyl 5-phosphate + NADPH + H(+). Its pathway is amino-acid biosynthesis; L-arginine biosynthesis; N(2)-acetyl-L-ornithine from L-glutamate: step 3/4. In terms of biological role, catalyzes the NADPH-dependent reduction of N-acetyl-5-glutamyl phosphate to yield N-acetyl-L-glutamate 5-semialdehyde. This Janthinobacterium sp. (strain Marseille) (Minibacterium massiliensis) protein is N-acetyl-gamma-glutamyl-phosphate reductase.